We begin with the raw amino-acid sequence, 193 residues long: Recombination protein RecR (193 aa).

A C4-type zinc finger spans residues cysteine 61–cysteine 76. The region spanning serine 84 to proline 170 is the Toprim domain.

It belongs to the RecR family.

Its function is as follows. May play a role in DNA repair. It seems to be involved in an RecBC-independent recombinational process of DNA repair. It may act with RecF and RecO. This Helicobacter pylori (strain G27) protein is Recombination protein RecR.